A 457-amino-acid chain; its full sequence is Bifunctional protein GlmU (457 aa).

The pyrophosphorylase stretch occupies residues 1–228 (MEGLVTLILA…SEEITGVNSR (228 aa)). Residues 9 to 12 (LAAG), K23, Q73, and 78 to 79 (GT) each bind UDP-N-acetyl-alpha-D-glucosamine. Mg(2+) is bound at residue D102. The UDP-N-acetyl-alpha-D-glucosamine site is built by G139, E154, N169, and N226. A Mg(2+)-binding site is contributed by N226. A linker region spans residues 229 to 249 (VQLFEAEKIMRKRINYRHMEN). The segment at 250–457 (GVTIVDPDTT…VQERIKKGRL (208 aa)) is N-acetyltransferase. R331 and K349 together coordinate UDP-N-acetyl-alpha-D-glucosamine. H361 acts as the Proton acceptor in catalysis. 2 residues coordinate UDP-N-acetyl-alpha-D-glucosamine: Y364 and N375. Acetyl-CoA contacts are provided by residues 384 to 385 (NY), A421, and R438.

In the N-terminal section; belongs to the N-acetylglucosamine-1-phosphate uridyltransferase family. This sequence in the C-terminal section; belongs to the transferase hexapeptide repeat family. In terms of assembly, homotrimer. It depends on Mg(2+) as a cofactor.

Its subcellular location is the cytoplasm. The enzyme catalyses alpha-D-glucosamine 1-phosphate + acetyl-CoA = N-acetyl-alpha-D-glucosamine 1-phosphate + CoA + H(+). It catalyses the reaction N-acetyl-alpha-D-glucosamine 1-phosphate + UTP + H(+) = UDP-N-acetyl-alpha-D-glucosamine + diphosphate. It functions in the pathway nucleotide-sugar biosynthesis; UDP-N-acetyl-alpha-D-glucosamine biosynthesis; N-acetyl-alpha-D-glucosamine 1-phosphate from alpha-D-glucosamine 6-phosphate (route II): step 2/2. It participates in nucleotide-sugar biosynthesis; UDP-N-acetyl-alpha-D-glucosamine biosynthesis; UDP-N-acetyl-alpha-D-glucosamine from N-acetyl-alpha-D-glucosamine 1-phosphate: step 1/1. The protein operates within bacterial outer membrane biogenesis; LPS lipid A biosynthesis. Its function is as follows. Catalyzes the last two sequential reactions in the de novo biosynthetic pathway for UDP-N-acetylglucosamine (UDP-GlcNAc). The C-terminal domain catalyzes the transfer of acetyl group from acetyl coenzyme A to glucosamine-1-phosphate (GlcN-1-P) to produce N-acetylglucosamine-1-phosphate (GlcNAc-1-P), which is converted into UDP-GlcNAc by the transfer of uridine 5-monophosphate (from uridine 5-triphosphate), a reaction catalyzed by the N-terminal domain. This is Bifunctional protein GlmU from Thermoanaerobacter pseudethanolicus (strain ATCC 33223 / 39E) (Clostridium thermohydrosulfuricum).